A 199-amino-acid polypeptide reads, in one-letter code: Adenine phosphoribosyltransferase (199 aa).

It belongs to the purine/pyrimidine phosphoribosyltransferase family. Homodimer.

It is found in the cytoplasm. It catalyses the reaction AMP + diphosphate = 5-phospho-alpha-D-ribose 1-diphosphate + adenine. The protein operates within purine metabolism; AMP biosynthesis via salvage pathway; AMP from adenine: step 1/1. In terms of biological role, catalyzes a salvage reaction resulting in the formation of AMP, that is energically less costly than de novo synthesis. The chain is Adenine phosphoribosyltransferase from Rhodopseudomonas palustris (strain BisB18).